We begin with the raw amino-acid sequence, 421 residues long: Imidazolonepropionase (421 aa).

Fe(3+) contacts are provided by H81 and H83. Zn(2+) is bound by residues H81 and H83. The 4-imidazolone-5-propanoate site is built by R90, Y153, and H186. An N-formimidoyl-L-glutamate-binding site is contributed by Y153. A Fe(3+)-binding site is contributed by H251. A Zn(2+)-binding site is contributed by H251. E254 serves as a coordination point for 4-imidazolone-5-propanoate. A Fe(3+)-binding site is contributed by D326. Residue D326 coordinates Zn(2+). N-formimidoyl-L-glutamate-binding residues include N328 and G330. A 4-imidazolone-5-propanoate-binding site is contributed by S331.

It belongs to the metallo-dependent hydrolases superfamily. HutI family. Requires Zn(2+) as cofactor. The cofactor is Fe(3+).

It localises to the cytoplasm. It catalyses the reaction 4-imidazolone-5-propanoate + H2O = N-formimidoyl-L-glutamate. The protein operates within amino-acid degradation; L-histidine degradation into L-glutamate; N-formimidoyl-L-glutamate from L-histidine: step 3/3. Catalyzes the hydrolytic cleavage of the carbon-nitrogen bond in imidazolone-5-propanoate to yield N-formimidoyl-L-glutamate. It is the third step in the universal histidine degradation pathway. This chain is Imidazolonepropionase, found in Streptococcus pyogenes serotype M3 (strain SSI-1).